Here is a 448-residue protein sequence, read N- to C-terminus: B box and SPRY domain-containing protein (448 aa).

Positions 1 to 18 (MSSDVSGTESGSESGPES) are enriched in low complexity. Residues 1–58 (MSSDVSGTESGSESGPESVPEPVPEPGPEPESEPGPGPAPGPGPGPAPGPGPGLGREP) form a disordered region. Residues 19-51 (VPEPVPEPGPEPESEPGPGPAPGPGPGPAPGPG) show a composition bias toward pro residues. The B box-type zinc finger occupies 63–111 (QPCQLCPEHGKPLSWFCLSERRPVCATCAGFGGRCHRHRIRRAEEHAEE). The region spanning 257 to 448 (SPLLTQLWAT…VADQVISIVC (192 aa)) is the B30.2/SPRY domain.

In terms of assembly, interacts with TRPV5 and TRPV6. Interacts with YWHAZ/14-3-3 protein zeta. In terms of tissue distribution, predominantly expressed in testis. Expressed in brain at low levels.

Its subcellular location is the cytoplasm. The protein resides in the membrane. In terms of biological role, may regulate epithelial calcium transport by inhibiting TRPV5 activity. This chain is B box and SPRY domain-containing protein (Bspry), found in Rattus norvegicus (Rat).